A 505-amino-acid polypeptide reads, in one-letter code: Ribosomal RNA small subunit methyltransferase F (505 aa).

S-adenosyl-L-methionine contacts are provided by residues 123 to 129 (ASAPGSK), Glu147, Asp174, and Asp192. Cys245 functions as the Nucleophile in the catalytic mechanism. Residues 409–437 (GTNANNNSNTNPNNNANTNPNNNSNTNPR) are disordered. Over residues 410–435 (TNANNNSNTNPNNNANTNPNNNSNTN) the composition is skewed to low complexity.

This sequence belongs to the class I-like SAM-binding methyltransferase superfamily. RsmB/NOP family.

The protein localises to the cytoplasm. It carries out the reaction cytidine(1407) in 16S rRNA + S-adenosyl-L-methionine = 5-methylcytidine(1407) in 16S rRNA + S-adenosyl-L-homocysteine + H(+). Specifically methylates the cytosine at position 1407 (m5C1407) of 16S rRNA. The polypeptide is Ribosomal RNA small subunit methyltransferase F (Shewanella denitrificans (strain OS217 / ATCC BAA-1090 / DSM 15013)).